We begin with the raw amino-acid sequence, 375 residues long: POU domain, class 3, transcription factor 1 (375 aa).

Disordered regions lie at residues 1–29 (MAAT…RMHQ), 56–139 (MSLT…QPLI), and 151–200 (MLGP…PSSD). 3 stretches are compositionally biased toward polar residues: residues 107 to 117 (VHQQTPSSHAW), 130 to 139 (PGSNSHQPLI), and 151 to 160 (MLGPQASSLH). Residues 162–171 (SMRDPLHDDP) are compositionally biased toward basic and acidic residues. The POU-specific domain occupies 194 to 268 (EDAPSSDDLE…LLNKWLEETD (75 aa)). The segment at residues 286–345 (KRKKRTSIEVGVKGALENHFLKCPKPSAHEITSLADSLQLEKEVVRVWFCNRRQKEKRMT) is a DNA-binding region (homeobox).

Belongs to the POU transcription factor family. Class-3 subfamily.

The protein resides in the nucleus. Its function is as follows. Acts as a transcription factor. May play a role in neuronal differentiation. The chain is POU domain, class 3, transcription factor 1 from Xenopus tropicalis (Western clawed frog).